The following is a 447-amino-acid chain: N-succinylarginine dihydrolase (447 aa).

Residues 19–28 (AGLSFGNEAS), N110, and 137–138 (HR) contribute to the substrate site. E174 is an active-site residue. R212 provides a ligand contact to substrate. Residue H248 is part of the active site. Substrate contacts are provided by D250 and N359. Residue C365 is the Nucleophile of the active site.

Belongs to the succinylarginine dihydrolase family. Homodimer.

The catalysed reaction is N(2)-succinyl-L-arginine + 2 H2O + 2 H(+) = N(2)-succinyl-L-ornithine + 2 NH4(+) + CO2. The protein operates within amino-acid degradation; L-arginine degradation via AST pathway; L-glutamate and succinate from L-arginine: step 2/5. In terms of biological role, catalyzes the hydrolysis of N(2)-succinylarginine into N(2)-succinylornithine, ammonia and CO(2). This chain is N-succinylarginine dihydrolase, found in Salmonella paratyphi B (strain ATCC BAA-1250 / SPB7).